Reading from the N-terminus, the 266-residue chain is Trypsin 5G1 (266 aa).

The signal sequence occupies residues 1–18 (MTRIILILTATFFACALG). A propeptide spans 19-39 (ASTGGSHPLRPWWNALRSSGR) (activation peptide). Residues 40 to 265 (IVGGFEVPVE…VRDWVKEVSG (226 aa)) enclose the Peptidase S1 domain. A disulfide bridge links Cys66 with Cys82. Catalysis depends on charge relay system residues His81 and Asp125. Intrachain disulfides connect Cys190–Cys206 and Cys217–Cys241. Ser221 functions as the Charge relay system in the catalytic mechanism.

This sequence belongs to the peptidase S1 family. Midgut.

Its subcellular location is the secreted. The protein localises to the extracellular space. The catalysed reaction is Preferential cleavage: Arg-|-Xaa, Lys-|-Xaa.. Major function may be to aid in digestion of the blood meal. This chain is Trypsin 5G1, found in Aedes aegypti (Yellowfever mosquito).